We begin with the raw amino-acid sequence, 271 residues long: NH(3)-dependent NAD(+) synthetase (271 aa).

An ATP-binding site is contributed by 43–50 (GISGGQDS). Asp49 is a Mg(2+) binding site. Residue Arg136 coordinates deamido-NAD(+). Position 156 (Thr156) interacts with ATP. A Mg(2+)-binding site is contributed by Glu161. Deamido-NAD(+) contacts are provided by Lys169 and Asp176. ATP is bound by residues Lys185 and Thr207. Residue 256–257 (HK) coordinates deamido-NAD(+).

It belongs to the NAD synthetase family. Homodimer.

The catalysed reaction is deamido-NAD(+) + NH4(+) + ATP = AMP + diphosphate + NAD(+) + H(+). It participates in cofactor biosynthesis; NAD(+) biosynthesis; NAD(+) from deamido-NAD(+) (ammonia route): step 1/1. Functionally, catalyzes the ATP-dependent amidation of deamido-NAD to form NAD. Uses ammonia as a nitrogen source. This Tropheryma whipplei (strain TW08/27) (Whipple's bacillus) protein is NH(3)-dependent NAD(+) synthetase.